Consider the following 197-residue polypeptide: MIIGITGGIASGKSTVVKVIRKAGYQVIDADQVVHDLQEKGGRLYEALREAFGNQILKADGELDRTKLSEMLFSNPDNMATSSAIQNQIIKEELAAKRDHLAQSQAIFFMDIPLLMELGYQDWFDAIWLVYVDAQTQLQRLMARNRLDKGKARQRIASQLPIEEKKPYASLVIDNSGDIAALIKQVQSALLLLANPR.

The region spanning 2-197 (IIGITGGIAS…SALLLLANPR (196 aa)) is the DPCK domain. 10–15 (ASGKST) contributes to the ATP binding site.

It belongs to the CoaE family.

The protein localises to the cytoplasm. It carries out the reaction 3'-dephospho-CoA + ATP = ADP + CoA + H(+). It functions in the pathway cofactor biosynthesis; coenzyme A biosynthesis; CoA from (R)-pantothenate: step 5/5. Catalyzes the phosphorylation of the 3'-hydroxyl group of dephosphocoenzyme A to form coenzyme A. The sequence is that of Dephospho-CoA kinase from Streptococcus pyogenes serotype M1.